A 184-amino-acid polypeptide reads, in one-letter code: Luciferin-binding protein (184 aa).

4 EF-hand domains span residues 10–45 (YHLR…IAKI), 46–81 (AKLS…EEAA), 98–133 (MAVI…VGPD), and 134–169 (ITDD…FLFG). Ca(2+)-binding residues include Asp111, Asp113, Asp115, Tyr117, Glu122, Asp147, Asn149, Asn151, Gln153, and Glu158.

This Ca(2+)-dependent protein binds to luciferin. The luciferin of LBP is capable of reacting with luciferase and O(2) only when calcium is bound. The polypeptide is Luciferin-binding protein (Renilla reniformis (Sea pansy)).